The primary structure comprises 581 residues: MAVAGAVSGEPLVHWCTQQLRKTFGLDVSEEIIQYVLSIESAEEIREYVTDLLQGNEGKKGQFIEELITKWQKNDQELISDPLQQCFKKDEILDGQKSGDHLKRGRKKGRNRQEVPAFTEPDTTAEVKTPFDLAKAQENSNSVKKKTKFVNLYTREGQDRLAVLLPGRHPCDCLGQKHKLINNCLICGRIVCEQEGSGPCLFCGTLVCTHEEQDILQRDSNKSQKLLKKLMSGVENSGKVDISTKDLLPHQELRIKSGLEKAIKHKDKLLEFDRTSIRRTQVIDDESDYFASDSNQWLSKLERETLQKREEELRELRHASRLSKKVTIDFAGRKILEEENSLAEYHSRLDETIQAIANGTLNQPLTKLDRSSEEPLGVLVNPNMYQSPPQWVDHTGAASQKKAFRSSGFGLEFNSFQHQLRIQDQEFQEGFDGGWCLSVHQPWASLLVRGIKRVEGRSWYTPHRGRLWIAATAKKPSPQEVSELQATYRLLRGKDVEFPNDYPSGCLLGCVDLIDCLSQKQFKEQFPDISQESDSPFVFICKNPQEMVVKFPIKGNPKIWKLDSKIHQGAKKGLMKQNKAV.

Position 2 is an N-acetylalanine (Ala-2). A disordered region spans residues 97 to 118 (KSGDHLKRGRKKGRNRQEVPAF). A C4-type zinc finger spans residues 171-187 (CDCLGQKHKLINNCLIC). Positions 200 to 300 (CLFCGTLVCT…ASDSNQWLSK (101 aa)) are mediates interaction with DDRGK1. Position 276 is a phosphoserine (Ser-276). Residue Tyr-289 is modified to Phosphotyrosine. A mediates interaction with UFL1 region spans residues 300–400 (KLERETLQKR…WVDHTGAASQ (101 aa)). Glycyl lysine isopeptide (Lys-Gly) (interchain with G-Cter in UFM1) cross-links involve residues Lys-324, Lys-325, and Lys-334. At Ser-341 the chain carries Phosphoserine. A Glycyl lysine isopeptide (Lys-Gly) (interchain with G-Cter in UFM1) cross-link involves residue Lys-367. The 95-residue stretch at 437 to 531 (LSVHQPWASL…FKEQFPDISQ (95 aa)) folds into the ASCH domain.

Interacts with the thyroid hormone receptor/TR (via the ligand-binding domain); this interaction requires the presence of thyroid hormone. Interacts with the androgen receptor/AR; in an androgen, testosterone and dihydrotestosterone-dependent manner. Interacts with ESR1 (estrogen ligand-bound); competes with UFSP2. Interacts with UFSP2; competes with ligand-bound ESR1. Interacts with DDRGK1 and UFL1; the interaction with DDRGK1 is direct. Interacts with NCOA1. Interacts with EP300. Part of the ASC-1 complex, that contains TRIP4, ASCC1, ASCC2 and ASCC3. Identified in the RQT (ribosome quality control trigger) complex, that contains ASCC2, ASCC3 and TRIP4. Interacts with NEK6. Interacts with CSRP1. Interacts with ZCCHC4. Phosphorylated by NEK6. Post-translationally, polyufmylated by the UFM1-conjugating system composed of the enzymes UBA5, UFC1 and UFL1. Deufmylated by the protease UFSP2. Ufmylation of TRIP4 is promoted by ligand-bound nuclear receptors that compete with UFSP2 for interaction with TRIP4. Nuclear receptors-induced ufmylation promotes the recruitment of additional transcriptional coactivators like EP300 and NCOA1 and therefore the assembly of a coactivator complex facilitating nuclear receptor-mediated transcription.

Its subcellular location is the nucleus. The protein resides in the cytoplasm. The protein localises to the cytosol. It localises to the cytoskeleton. It is found in the microtubule organizing center. Its subcellular location is the centrosome. Transcription coactivator which associates with nuclear receptors, transcriptional coactivators including EP300, CREBBP and NCOA1, and basal transcription factors like TBP and TFIIA to facilitate nuclear receptors-mediated transcription. May thereby play an important role in establishing distinct coactivator complexes under different cellular conditions. Plays a role in thyroid hormone receptor and estrogen receptor transactivation. Also involved in androgen receptor transactivation. Plays a pivotal role in the transactivation of NF-kappa-B, SRF and AP1. Acts as a mediator of transrepression between nuclear receptor and either AP1 or NF-kappa-B. May play a role in the development of neuromuscular junction. May play a role in late myogenic differentiation. Also functions as part of the RQC trigger (RQT) complex that activates the ribosome quality control (RQC) pathway, a pathway that degrades nascent peptide chains during problematic translation. This Homo sapiens (Human) protein is Activating signal cointegrator 1.